Reading from the N-terminus, the 319-residue chain is 4-hydroxy-3-methylbut-2-enyl diphosphate reductase (319 aa).

Position 18 (C18) interacts with [4Fe-4S] cluster. 2 residues coordinate (2E)-4-hydroxy-3-methylbut-2-enyl diphosphate: H47 and H81. Dimethylallyl diphosphate-binding residues include H47 and H81. The isopentenyl diphosphate site is built by H47 and H81. Residue C103 coordinates [4Fe-4S] cluster. H131 contacts (2E)-4-hydroxy-3-methylbut-2-enyl diphosphate. H131 is a binding site for dimethylallyl diphosphate. H131 provides a ligand contact to isopentenyl diphosphate. E133 functions as the Proton donor in the catalytic mechanism. Position 172 (T172) interacts with (2E)-4-hydroxy-3-methylbut-2-enyl diphosphate. C202 is a [4Fe-4S] cluster binding site. Positions 230, 231, 232, and 275 each coordinate (2E)-4-hydroxy-3-methylbut-2-enyl diphosphate. Residues S230, S231, N232, and S275 each coordinate dimethylallyl diphosphate. S230, S231, N232, and S275 together coordinate isopentenyl diphosphate.

It belongs to the IspH family. It depends on [4Fe-4S] cluster as a cofactor.

The catalysed reaction is isopentenyl diphosphate + 2 oxidized [2Fe-2S]-[ferredoxin] + H2O = (2E)-4-hydroxy-3-methylbut-2-enyl diphosphate + 2 reduced [2Fe-2S]-[ferredoxin] + 2 H(+). It carries out the reaction dimethylallyl diphosphate + 2 oxidized [2Fe-2S]-[ferredoxin] + H2O = (2E)-4-hydroxy-3-methylbut-2-enyl diphosphate + 2 reduced [2Fe-2S]-[ferredoxin] + 2 H(+). The protein operates within isoprenoid biosynthesis; dimethylallyl diphosphate biosynthesis; dimethylallyl diphosphate from (2E)-4-hydroxy-3-methylbutenyl diphosphate: step 1/1. It participates in isoprenoid biosynthesis; isopentenyl diphosphate biosynthesis via DXP pathway; isopentenyl diphosphate from 1-deoxy-D-xylulose 5-phosphate: step 6/6. Catalyzes the conversion of 1-hydroxy-2-methyl-2-(E)-butenyl 4-diphosphate (HMBPP) into a mixture of isopentenyl diphosphate (IPP) and dimethylallyl diphosphate (DMAPP). Acts in the terminal step of the DOXP/MEP pathway for isoprenoid precursor biosynthesis. The sequence is that of 4-hydroxy-3-methylbut-2-enyl diphosphate reductase from Methylocella silvestris (strain DSM 15510 / CIP 108128 / LMG 27833 / NCIMB 13906 / BL2).